Consider the following 216-residue polypeptide: Thiopurine S-methyltransferase (216 aa).

Residues W10, L45, E66, and R123 each contribute to the S-adenosyl-L-methionine site.

The protein belongs to the class I-like SAM-binding methyltransferase superfamily. TPMT family.

It is found in the cytoplasm. The catalysed reaction is S-adenosyl-L-methionine + a thiopurine = S-adenosyl-L-homocysteine + a thiopurine S-methylether.. This chain is Thiopurine S-methyltransferase, found in Pseudomonas putida (strain GB-1).